Here is a 160-residue protein sequence, read N- to C-terminus: Ureidoglycolate lyase (160 aa).

This sequence belongs to the ureidoglycolate lyase family. In terms of assembly, homodimer. Requires Ni(2+) as cofactor.

The enzyme catalyses (S)-ureidoglycolate = urea + glyoxylate. It functions in the pathway nitrogen metabolism; (S)-allantoin degradation. Its function is as follows. Catalyzes the catabolism of the allantoin degradation intermediate (S)-ureidoglycolate, generating urea and glyoxylate. Involved in the anaerobic utilization of allantoin as sole nitrogen source. Reinforces the induction of genes involved in the degradation of allantoin and glyoxylate by producing glyoxylate. In Escherichia coli O127:H6 (strain E2348/69 / EPEC), this protein is Ureidoglycolate lyase.